Here is a 388-residue protein sequence, read N- to C-terminus: MNLHEYQAKQLFARSGLPTPVGYACSTPREAEEAASKIGSGPWVVKCQVHAGGRGKAGGVKVVKSKEEIRAFAEHWLGKRLVTYQTDANGQPVNQILVEAATDIAKELYLGAVVDRGSRRVVFMASTEGGVEIEKVAEETPHLIHKVAIDPLTGPMPYQGRELAFKLGLEGKLVQQFTKVFMGLANIFLERDLALIEINPLVITSQGDLICLDGKLGADGNALFRQPDLREMRDQSQEDPREAQAAQWELNYVALDGNIGCMVNGAGLAMGTMDIVKLHGGEPANFLDVGGGATKERVTEAFKIILSDDKVKAVLVNIFGGIVRCDLIADGIIGAVAEVGVNVPVVVRLEGNNAELGAKKLADSGLNIIAAKSLTDAAQQVVAAVEGK.

Residues 9–244 enclose the ATP-grasp domain; that stretch reads KQLFARSGLP…QSQEDPREAQ (236 aa). Residues lysine 46, 53-55, glutamate 99, threonine 102, and glutamate 107 contribute to the ATP site; that span reads GRG. Mg(2+) is bound by residues asparagine 199 and aspartate 213. Substrate-binding positions include asparagine 264 and 321-323; that span reads GIV.

This sequence belongs to the succinate/malate CoA ligase beta subunit family. As to quaternary structure, heterotetramer of two alpha and two beta subunits. Mg(2+) is required as a cofactor.

The catalysed reaction is succinate + ATP + CoA = succinyl-CoA + ADP + phosphate. The enzyme catalyses GTP + succinate + CoA = succinyl-CoA + GDP + phosphate. It participates in carbohydrate metabolism; tricarboxylic acid cycle; succinate from succinyl-CoA (ligase route): step 1/1. Functionally, succinyl-CoA synthetase functions in the citric acid cycle (TCA), coupling the hydrolysis of succinyl-CoA to the synthesis of either ATP or GTP and thus represents the only step of substrate-level phosphorylation in the TCA. The beta subunit provides nucleotide specificity of the enzyme and binds the substrate succinate, while the binding sites for coenzyme A and phosphate are found in the alpha subunit. In Cronobacter sakazakii (strain ATCC BAA-894) (Enterobacter sakazakii), this protein is Succinate--CoA ligase [ADP-forming] subunit beta.